Here is a 364-residue protein sequence, read N- to C-terminus: Membrane-bound lytic murein transglycosylase C (364 aa).

An N-terminal signal peptide occupies residues 1–19 (MNKYKKFLPLLVLIPFLAS). Residue C20 is the site of N-palmitoyl cysteine attachment. C20 carries S-diacylglycerol cysteine lipidation.

Belongs to the transglycosylase Slt family.

The protein localises to the cell outer membrane. The catalysed reaction is Exolytic cleavage of the (1-&gt;4)-beta-glycosidic linkage between N-acetylmuramic acid (MurNAc) and N-acetylglucosamine (GlcNAc) residues in peptidoglycan, from either the reducing or the non-reducing ends of the peptidoglycan chains, with concomitant formation of a 1,6-anhydrobond in the MurNAc residue.. Its function is as follows. Murein-degrading enzyme. May play a role in recycling of muropeptides during cell elongation and/or cell division. This chain is Membrane-bound lytic murein transglycosylase C, found in Glaesserella parasuis serovar 5 (strain SH0165) (Haemophilus parasuis).